The following is a 440-amino-acid chain: Suppressor of cytokine signaling 4 (440 aa).

The segment covering 1–10 (MAENNENISK) has biased composition (polar residues). Positions 1–29 (MAENNENISKNVDVRPKTSRSRSADRKDG) are disordered. Residues 12-29 (VDVRPKTSRSRSADRKDG) are compositionally biased toward basic and acidic residues. The SH2 domain maps to 286–381 (CYWGVMDKYA…FFEPLLSTPL (96 aa)). An SOCS box domain is found at 376 to 425 (LLSTPLIRTFPFSLQHICRTVICNCTTYDGIDALPIPSSMKLYLKEYHYK).

Its pathway is protein modification; protein ubiquitination. Its function is as follows. SOCS family proteins form part of a classical negative feedback system that regulates cytokine signal transduction. Substrate-recognition component of a SCF-like ECS (Elongin BC-CUL2/5-SOCS-box protein) E3 ubiquitin-protein ligase complex which mediates the ubiquitination and subsequent proteasomal degradation of target proteins. Inhibits EGF signaling by mediating the degradation of the Tyr-phosphorylated EGF receptor/EGFR. This chain is Suppressor of cytokine signaling 4 (SOCS4), found in Homo sapiens (Human).